A 530-amino-acid chain; its full sequence is G2/mitotic-specific cyclin-B (530 aa).

The segment at 76 to 152 (ARVDSHWKKQ…EPTLKREDSN (77 aa)) is disordered. Residues 121-144 (PTKTTVEPTKVTVKSSSSENVNEP) show a composition bias toward low complexity. The residue at position 137 (serine 137) is a Phosphoserine.

The protein belongs to the cyclin family. Cyclin AB subfamily. As to quaternary structure, interacts with the protein kinase Cdk1 to form a serine/threonine kinase holoenzyme complex also known as maturation promoting factor (MPF). The cyclin subunit imparts substrate specificity to the complex.

In terms of biological role, essential for the control of the cell cycle at the G2/M (mitosis) transition. In Drosophila melanogaster (Fruit fly), this protein is G2/mitotic-specific cyclin-B (CycB).